A 62-amino-acid chain; its full sequence is Large ribosomal subunit protein bL28 (62 aa).

Residues 1 to 22 form a disordered region; the sequence is MGKQCFVTGRKASTGNRRSHAL.

It belongs to the bacterial ribosomal protein bL28 family.

This chain is Large ribosomal subunit protein bL28, found in Staphylococcus aureus (strain N315).